The chain runs to 635 residues: MSHTPTPAAGSGHASANSQTALVIGAIGVVFGDIGTSPLYTLKEAFSPHYGLTPDHDTVLGILSLVFWALMLVVTLKYVTVIMRADNDGEGGIMALTALAQRTLPGGSRSMYVVGILGIFGASLFFGDGVITPAISVLSAVEGLQVAAPKLEAFVVPITLVVLGMLFLAQRFGTERVGKAFGPITLVWFFALGAIGVYNMARAPEVLHALNPWWGVLFFVEHNWHAVFVLGAVVLAVTGGEALYADMGHFGAKAIRRSWQFVVLPMLTLTYLGQGALVLRDPSAVSNPFYEAVPEWALYPMIVLATAATVIASQALITGAYSVASQAMQLGYIPRMHIRHTSHSTIGQIYVPAVNWCLLLAVAVAVVGFGDSTSLATAYGVSVTGTMLITTVLMVIYARANPRVPAPLLWLFALVFLAVDCAFFYANIIKFLDGAWFPLLLGLILFTLMRTWRRGRKLLHDEIRKDGIKLDTFLPGLMLAPPVRVPGTAVFLTADPMVVPHALMHNLKHNKVLHERNVFLTVETLQGPYAAAGKRLKIEAIGDEFYRVHVRFGFMETPDVPLALMRSCDQGGIYFDPMDTTYFASRETIVASANRGMPIWRDKLFALMHRNAAPATGFFRIPGNRLVELGAQVEI.

12 consecutive transmembrane segments (helical) span residues 22–42, 59–79, 111–131, 148–168, 180–200, 216–236, 259–279, 297–317, 349–369, 378–398, 404–424, and 428–448; these read LVIGAIGVVFGDIGTSPLYTL, VLGILSLVFWALMLVVTLKYV, MYVVGILGIFGASLFFGDGVI, APKLEAFVVPITLVVLGMLFL, AFGPITLVWFFALGAIGVYNM, VLFFVEHNWHAVFVLGAVVLA, WQFVVLPMLTLTYLGQGALVL, ALYPMIVLATAATVIASQALI, IYVPAVNWCLLLAVAVAVVGF, AYGVSVTGTMLITTVLMVIYA, VPAPLLWLFALVFLAVDCAFF, and IIKFLDGAWFPLLLGLILFTL.

It belongs to the HAK/KUP transporter (TC 2.A.72) family.

Its subcellular location is the cell inner membrane. It catalyses the reaction K(+)(in) + H(+)(in) = K(+)(out) + H(+)(out). In terms of biological role, transport of potassium into the cell. Likely operates as a K(+):H(+) symporter. The chain is Probable potassium transport system protein Kup from Xanthomonas oryzae pv. oryzae (strain KACC10331 / KXO85).